A 385-amino-acid chain; its full sequence is Leucine aminopeptidase 1 (385 aa).

Positions 1-19 (MKFPSFLSLGIAASTTALA) are cleaved as a signal peptide. The propeptide occupies 20–87 (ALPDQKPIGD…FPRAFAKTAV (68 aa)). The N-linked (GlcNAc...) asparagine glycan is linked to N177. Zn(2+) contacts are provided by H185 and D204. The N-linked (GlcNAc...) asparagine glycan is linked to N229. 2 residues coordinate Zn(2+): E243 and D270. A disulfide bridge connects residues C319 and C323. H352 is a binding site for Zn(2+).

It belongs to the peptidase M28 family. M28E subfamily. As to quaternary structure, monomer. It depends on Zn(2+) as a cofactor.

It localises to the secreted. Extracellular aminopeptidase that allows assimilation of proteinaceous substrates. In Ajellomyces dermatitidis (strain ER-3 / ATCC MYA-2586) (Blastomyces dermatitidis), this protein is Leucine aminopeptidase 1 (LAP1).